Reading from the N-terminus, the 33-residue chain is Cytochrome b6-f complex subunit 7 (33 aa).

A helical transmembrane segment spans residues 5-25; that stretch reads IFNTAVITFTLVLVGLGAGYL.

The protein belongs to the PetM family. In terms of assembly, the 4 large subunits of the cytochrome b6-f complex are cytochrome b6, subunit IV (17 kDa polypeptide, PetD), cytochrome f and the Rieske protein, while the 4 small subunits are PetG, PetL, PetM and PetN. The complex functions as a dimer.

The protein localises to the cellular thylakoid membrane. In terms of biological role, component of the cytochrome b6-f complex, which mediates electron transfer between photosystem II (PSII) and photosystem I (PSI), cyclic electron flow around PSI, and state transitions. In Thermosynechococcus vestitus (strain NIES-2133 / IAM M-273 / BP-1), this protein is Cytochrome b6-f complex subunit 7.